The primary structure comprises 445 residues: Gastrula zinc finger protein 5-1 (445 aa).

A disordered region spans residues 1–38; it reads MLQIKTEKEELDCGDDQNPKESSAVPLTDGASPEPQPQ. A Phosphoserine; by CK2 modification is found at S89. The C2H2-type 1; atypical zinc finger occupies 185-210; the sequence is FICCKCGDSFAHHSDLHTHLYACAGH. C2H2-type zinc fingers lie at residues 239–261, 267–289, 295–317, 323–345, 351–373, 379–401, and 407–429; these read FKCTVCGKCFTLKNSLQLHHRIH, FTCTECGKSFAQSCSLQLHSRTH, YVCTECGKRFSSNSGLRRHMRTH, YACKECGKFFSDLSTLHRHQNSH, FICTECGKGFTLKDSLHRHQRTH, FICSQCGKSYSQSSNLIKHQMIH, and FSCSECGKCFAVKDGLRNHQRVH.

Its function is as follows. Binds to RNA homomers. This chain is Gastrula zinc finger protein 5-1, found in Xenopus laevis (African clawed frog).